A 103-amino-acid chain; its full sequence is MYAVIKTGGQQFRVEQGTTLKIEKLEIESGKKVTFKEVLMVADGDNVRVGTPFVPKVTVEAKIISQGKEKKVHILKFRRRKHSMKQQGHRQLFTEIEIVKIKA.

Belongs to the bacterial ribosomal protein bL21 family. Part of the 50S ribosomal subunit. Contacts protein L20.

This protein binds to 23S rRNA in the presence of protein L20. The chain is Large ribosomal subunit protein bL21 from Ruthia magnifica subsp. Calyptogena magnifica.